The chain runs to 90 residues: Small ribosomal subunit protein bS20 (90 aa).

The protein belongs to the bacterial ribosomal protein bS20 family.

Binds directly to 16S ribosomal RNA. In Roseiflexus sp. (strain RS-1), this protein is Small ribosomal subunit protein bS20.